Here is a 263-residue protein sequence, read N- to C-terminus: Probable cyclic nucleotide phosphodiesterase CPS_4178 (263 aa).

Positions 21, 23, 62, 94, 160, 198, and 200 each coordinate Fe cation. Residues His23, Asp62, and 94 to 95 (NH) contribute to the AMP site. His200 contacts AMP.

Belongs to the cyclic nucleotide phosphodiesterase class-III family. Fe(2+) serves as cofactor.

This Colwellia psychrerythraea (strain 34H / ATCC BAA-681) (Vibrio psychroerythus) protein is Probable cyclic nucleotide phosphodiesterase CPS_4178.